Reading from the N-terminus, the 498-residue chain is Germ cell-less protein-like 2 (498 aa).

The Nuclear localization signal motif lies at Ser-33–Asn-39. A BTB domain is found at Ser-90 to Thr-160.

As to quaternary structure, interacts with CUL3.

The protein localises to the nucleus matrix. Its pathway is protein modification; protein ubiquitination. Its function is as follows. Possible function in spermatogenesis. Probable substrate-specific adapter of an E3 ubiquitin-protein ligase complex which mediates the ubiquitination and subsequent proteasomal degradation of target proteins. This is Germ cell-less protein-like 2 (Gmcl2) from Mus musculus (Mouse).